Consider the following 238-residue polypeptide: MTDTAENQTQNNWQAEHPRSIRSFVLRQSHMTAAQQRAIDTLWGSFGIDYQATPADLDARFGSSRPKILEIGFGMGTATAEIARRLPETDFLAIDVHGPGVGNLLKLIEENHLENIRVMRHDAVEVVENMLQDGSLDGIHIFFPDPWHKKRHHKRRLIQAPFIAKLLPKLKTGGYIHLATDWEEYAQQMLEVLSSFDSLQNTAADYAPTPDYRPETKFEARGKRLGHGVWDLVFKRIG.

Glutamate 70, aspartate 95, aspartate 122, and aspartate 145 together coordinate S-adenosyl-L-methionine. Aspartate 145 is an active-site residue. Residues lysine 149, aspartate 181, and 216–219 (TKFE) contribute to the substrate site.

Belongs to the class I-like SAM-binding methyltransferase superfamily. TrmB family.

The catalysed reaction is guanosine(46) in tRNA + S-adenosyl-L-methionine = N(7)-methylguanosine(46) in tRNA + S-adenosyl-L-homocysteine. It functions in the pathway tRNA modification; N(7)-methylguanine-tRNA biosynthesis. Catalyzes the formation of N(7)-methylguanine at position 46 (m7G46) in tRNA. This Neisseria meningitidis serogroup A / serotype 4A (strain DSM 15465 / Z2491) protein is tRNA (guanine-N(7)-)-methyltransferase.